The chain runs to 529 residues: uncharacterized protein (529 aa).

The region spanning 13–129 is the Arf-GAP domain; that stretch reads QTAMRKMRAL…LSTLCQEAQR (117 aa). The segment at 28-51 adopts a C4-type zinc-finger fold; sequence CFDCGARNPTWCTVTYGVFLCIDC. The segment covering 291–301 has biased composition (basic and acidic residues); that stretch reads QMEAKVAKDPT. Disordered stretches follow at residues 291–313, 335–357, 398–424, and 468–493; these read QMEA…GMGG, VLTF…DDKY, KSRY…GASP, and FGSE…SDLK. Positions 399–420 are enriched in low complexity; that stretch reads SRYTASSSSSSTSRAPTTRLTA. Polar residues predominate over residues 476–487; the sequence is NGSQQRQSSQVP.

Functionally, GTPase-activating protein for the ADP ribosylation factor family. This is an uncharacterized protein from Caenorhabditis elegans.